Reading from the N-terminus, the 500-residue chain is Putative beta-glucosidase 5 (500 aa).

Residues 1 to 20 (MEQFFALFTIFLSFAFPGRC) form the signal peptide. A beta-D-glucoside contacts are provided by residues Gln43, His140, and 185-186 (NE). Glu186 functions as the Proton donor in the catalytic mechanism. The cysteines at positions 205 and 212 are disulfide-linked. N-linked (GlcNAc...) asparagine glycosylation occurs at Asn216. Tyr328 is a binding site for a beta-D-glucoside. Asn361 is a glycosylation site (N-linked (GlcNAc...) asparagine). Glu394 serves as a coordination point for a beta-D-glucoside. Glu394 functions as the Nucleophile in the catalytic mechanism. The N-linked (GlcNAc...) asparagine glycan is linked to Asn424. Residues Trp434 and Tyr450 each coordinate a beta-D-glucoside. N-linked (GlcNAc...) asparagine glycans are attached at residues Asn456 and Asn495.

The protein belongs to the glycosyl hydrolase 1 family.

It carries out the reaction Hydrolysis of terminal, non-reducing beta-D-glucosyl residues with release of beta-D-glucose.. The polypeptide is Putative beta-glucosidase 5 (Arabidopsis thaliana (Mouse-ear cress)).